Consider the following 397-residue polypeptide: CCA-adding enzyme (397 aa).

ATP is bound by residues glycine 26 and arginine 29. CTP contacts are provided by glycine 26 and arginine 29. Aspartate 39 and aspartate 41 together coordinate Mg(2+). ATP is bound by residues arginine 110, aspartate 153, arginine 156, arginine 159, and arginine 162. 5 residues coordinate CTP: arginine 110, aspartate 153, arginine 156, arginine 159, and arginine 162.

It belongs to the tRNA nucleotidyltransferase/poly(A) polymerase family. Bacterial CCA-adding enzyme type 3 subfamily. As to quaternary structure, homodimer. Requires Mg(2+) as cofactor.

It carries out the reaction a tRNA precursor + 2 CTP + ATP = a tRNA with a 3' CCA end + 3 diphosphate. The enzyme catalyses a tRNA with a 3' CCA end + 2 CTP + ATP = a tRNA with a 3' CCACCA end + 3 diphosphate. Its function is as follows. Catalyzes the addition and repair of the essential 3'-terminal CCA sequence in tRNAs without using a nucleic acid template. Adds these three nucleotides in the order of C, C, and A to the tRNA nucleotide-73, using CTP and ATP as substrates and producing inorganic pyrophosphate. tRNA 3'-terminal CCA addition is required both for tRNA processing and repair. Also involved in tRNA surveillance by mediating tandem CCA addition to generate a CCACCA at the 3' terminus of unstable tRNAs. While stable tRNAs receive only 3'-terminal CCA, unstable tRNAs are marked with CCACCA and rapidly degraded. The chain is CCA-adding enzyme from Bacillus cereus (strain B4264).